The sequence spans 248 residues: Probable transcriptional regulatory protein Oant_1200 (248 aa).

This sequence belongs to the TACO1 family.

Its subcellular location is the cytoplasm. The sequence is that of Probable transcriptional regulatory protein Oant_1200 from Brucella anthropi (strain ATCC 49188 / DSM 6882 / CCUG 24695 / JCM 21032 / LMG 3331 / NBRC 15819 / NCTC 12168 / Alc 37) (Ochrobactrum anthropi).